A 186-amino-acid polypeptide reads, in one-letter code: Elongation factor P (186 aa).

The protein belongs to the elongation factor P family.

Its subcellular location is the cytoplasm. It participates in protein biosynthesis; polypeptide chain elongation. In terms of biological role, involved in peptide bond synthesis. Stimulates efficient translation and peptide-bond synthesis on native or reconstituted 70S ribosomes in vitro. Probably functions indirectly by altering the affinity of the ribosome for aminoacyl-tRNA, thus increasing their reactivity as acceptors for peptidyl transferase. The polypeptide is Elongation factor P (Brucella canis (strain ATCC 23365 / NCTC 10854 / RM-666)).